Consider the following 53-residue polypeptide: Conotoxin Vc5.3 (53 aa).

The signal sequence occupies residues 1 to 15 (VILLLLTASAPSVDA). A propeptide spanning residues 16–41 (RPKTEDVPLSSFRDNTKSTLQRLLKR) is cleaved from the precursor.

The protein belongs to the conotoxin T superfamily. Contains 2 disulfide bonds that can be either 'C1-C3, C2-C4' or 'C1-C4, C2-C3', since these disulfide connectivities have been observed for conotoxins with cysteine framework V (for examples, see AC P0DQQ7 and AC P81755). Expressed by the venom duct.

It localises to the secreted. This Conus victoriae (Queen Victoria cone) protein is Conotoxin Vc5.3.